The sequence spans 238 residues: Uridylate kinase (238 aa).

12-15 (KLSG) is an ATP binding site. Gly54 is a UMP binding site. ATP is bound by residues Gly55 and Arg59. Residues Asp74 and 135 to 142 (TGNPYFTT) contribute to the UMP site. Residues Thr162, Asn163, Tyr168, and Asp171 each coordinate ATP.

This sequence belongs to the UMP kinase family. Homohexamer.

The protein resides in the cytoplasm. It catalyses the reaction UMP + ATP = UDP + ADP. Its pathway is pyrimidine metabolism; CTP biosynthesis via de novo pathway; UDP from UMP (UMPK route): step 1/1. Inhibited by UTP. In terms of biological role, catalyzes the reversible phosphorylation of UMP to UDP. The chain is Uridylate kinase from Nitrobacter winogradskyi (strain ATCC 25391 / DSM 10237 / CIP 104748 / NCIMB 11846 / Nb-255).